The sequence spans 493 residues: Probable malate:quinone oxidoreductase (493 aa).

It belongs to the MQO family. Requires FAD as cofactor.

The enzyme catalyses (S)-malate + a quinone = a quinol + oxaloacetate. It functions in the pathway carbohydrate metabolism; tricarboxylic acid cycle; oxaloacetate from (S)-malate (quinone route): step 1/1. This chain is Probable malate:quinone oxidoreductase, found in Mycobacterium marinum (strain ATCC BAA-535 / M).